Here is a 201-residue protein sequence, read N- to C-terminus: Large ribosomal subunit protein uL4 (201 aa).

The tract at residues 44–68 (KAQKTRSEVAGTTKKSKKQKGGGAR) is disordered.

It belongs to the universal ribosomal protein uL4 family. In terms of assembly, part of the 50S ribosomal subunit.

Functionally, one of the primary rRNA binding proteins, this protein initially binds near the 5'-end of the 23S rRNA. It is important during the early stages of 50S assembly. It makes multiple contacts with different domains of the 23S rRNA in the assembled 50S subunit and ribosome. In terms of biological role, forms part of the polypeptide exit tunnel. This is Large ribosomal subunit protein uL4 from Xanthomonas oryzae pv. oryzae (strain MAFF 311018).